We begin with the raw amino-acid sequence, 321 residues long: uncharacterized protein (321 aa).

The first 22 residues, 1–22 (MKSIYKYTFMLFVFLFGTLMMA), serve as a signal peptide directing secretion.

Belongs to the bacterial solute-binding protein 1 family. WtpA subfamily.

This is an uncharacterized protein from Petrotoga mobilis (strain DSM 10674 / SJ95).